The chain runs to 227 residues: Max dimerization protein 1 (227 aa).

A Nuclear localization signal motif is present at residues 21–48; it reads RREREAEHGYASMLPYSKDRDAFKRRNK. Disordered stretches follow at residues 30–66, 142–161, and 184–227; these read YASM…MEKN, MDSV…REEL, and GWSS…GLGL. In terms of domain architecture, bHLH spans 55–107; sequence SSRSTHNEMEKNRRAHLRLCLEKLKGLVPLGPESSRHTTLSLLTKAKLHIKKL. Residues 198-211 are compositionally biased toward polar residues; that stretch reads MQSLGSDEGYSSAT. The segment covering 216-227 has biased composition (basic and acidic residues); it reads KLQDGHKAGLGL.

As to quaternary structure, heterodimer with MAX; the interaction is required for DNA-binding. DNA binding requires dimerization with another bHLH protein; does not form homodimers, and does not bind to DNA in the absence of MAX in vitro. Interacts with RNF17. Post-translationally, ubiquitinated by BIRC2/c-IAP1, leading to its subsequent degradation by the proteasome.

It localises to the nucleus. Component of a transcriptional repressor complex together with MAX. In complex with MAX binds to the core DNA sequence 5'-CAC[GA]TG-3'. Antagonizes MYC transcriptional activity by competing with MYC for MAX binding. Binds to the TERT promoter and represses telomerase expression, possibly by interfering with MYC binding. This Mus musculus (Mouse) protein is Max dimerization protein 1 (Mxd1).